The following is a 376-amino-acid chain: tRNA-specific 2-thiouridylase MnmA (376 aa).

ATP is bound by residues 17–24 and M43; that span reads GMSGGVDS. The segment at 103–105 is interaction with target base in tRNA; that stretch reads NPD. C108 serves as the catalytic Nucleophile. A disulfide bridge links C108 with C204. G132 contacts ATP. Residues 154–156 form an interaction with tRNA region; the sequence is KDQ. Residue C204 is the Cysteine persulfide intermediate of the active site. An interaction with tRNA region spans residues 316–317; sequence RY.

This sequence belongs to the MnmA/TRMU family.

It is found in the cytoplasm. The enzyme catalyses S-sulfanyl-L-cysteinyl-[protein] + uridine(34) in tRNA + AH2 + ATP = 2-thiouridine(34) in tRNA + L-cysteinyl-[protein] + A + AMP + diphosphate + H(+). Catalyzes the 2-thiolation of uridine at the wobble position (U34) of tRNA, leading to the formation of s(2)U34. This chain is tRNA-specific 2-thiouridylase MnmA, found in Pseudomonas savastanoi pv. phaseolicola (strain 1448A / Race 6) (Pseudomonas syringae pv. phaseolicola (strain 1448A / Race 6)).